The following is a 158-amino-acid chain: UPF0262 protein Rsph17029_2283 (158 aa).

It belongs to the UPF0262 family.

The sequence is that of UPF0262 protein Rsph17029_2283 from Cereibacter sphaeroides (strain ATCC 17029 / ATH 2.4.9) (Rhodobacter sphaeroides).